Here is a 581-residue protein sequence, read N- to C-terminus: A-type ATP synthase subunit A (581 aa).

ATP is bound at residue 232–239 (GPFGSGKT).

The protein belongs to the ATPase alpha/beta chains family. As to quaternary structure, has multiple subunits with at least A(3), B(3), C, D, E, F, H, I and proteolipid K(x).

The protein resides in the cell membrane. It catalyses the reaction ATP + H2O + 4 H(+)(in) = ADP + phosphate + 5 H(+)(out). Component of the A-type ATP synthase that produces ATP from ADP in the presence of a proton gradient across the membrane. The A chain is the catalytic subunit. This chain is A-type ATP synthase subunit A, found in Methanocorpusculum labreanum (strain ATCC 43576 / DSM 4855 / Z).